Reading from the N-terminus, the 199-residue chain is MRVGVLAVQGAFIEHEKILQNLGVECLELRNGKDARQDVEGLILPGGESTTQGKLLRELDMFEPLREKIVAGLPVLATCAGLILLAEELANDSARYFATLPVRVKRNAYGRQLGSFYTEEQFGDLGKVPMTFIRAPYIESVGEGVEILAKVKGDIVGVRYKNQIGLSFHPELNGDRRIHQMFLDSISDGKSAPCKQKAV.

47 to 49 is an L-glutamine binding site; it reads GES. Cys79 acts as the Nucleophile in catalysis. L-glutamine contacts are provided by residues Arg106 and 133 to 134; that span reads IR. Active-site charge relay system residues include His169 and Glu171.

The protein belongs to the glutaminase PdxT/SNO family. In the presence of PdxS, forms a dodecamer of heterodimers. Only shows activity in the heterodimer.

It carries out the reaction aldehydo-D-ribose 5-phosphate + D-glyceraldehyde 3-phosphate + L-glutamine = pyridoxal 5'-phosphate + L-glutamate + phosphate + 3 H2O + H(+). The catalysed reaction is L-glutamine + H2O = L-glutamate + NH4(+). It functions in the pathway cofactor biosynthesis; pyridoxal 5'-phosphate biosynthesis. In terms of biological role, catalyzes the hydrolysis of glutamine to glutamate and ammonia as part of the biosynthesis of pyridoxal 5'-phosphate. The resulting ammonia molecule is channeled to the active site of PdxS. This chain is Pyridoxal 5'-phosphate synthase subunit PdxT, found in Desulfitobacterium hafniense (strain Y51).